Reading from the N-terminus, the 299-residue chain is MSDAEEEVVEYEEEQEEEDWSEEEEDEQEEAVEEEDGEAEPDPEGEAEAEEDKAEEVGPDEEARDAEDGPVEDSKPKPSRLFMPNLVPPKIPDGERVDFDDIHRKRMEKDLNELQTLIEAHFENRKKEEEELISLKDRIEKRRAERAEQQRIRNEREKERQNRLAEERARREEEENRRKAEDEARKKKALSNMMHFGGYIQKAQTERKSGKRQTEREKKKKILAERRKVLAIDHLNEDQLREKAKELWQSIHNLEAEKFDLQEKFKQQKYEINVLRNRINDNQKVSKTRGKAKVTGRWK.

Positions 1-71 (MSDAEEEVVE…EARDAEDGPV (71 aa)) are enriched in acidic residues. Disordered stretches follow at residues 1–97 (MSDA…GERV) and 137–220 (DRIE…EKKK). Serine 2 carries the N-acetylserine modification. Serine 2 is subject to Phosphoserine. 2 stretches are compositionally biased toward basic and acidic residues: residues 137–185 (DRIE…DEAR) and 204–220 (QTER…EKKK). A Phosphothreonine; by PKC/PRKCA modification is found at threonine 205. Serine 209 is subject to Phosphoserine; by PKC/PRKCA. Threonine 214 is modified (phosphothreonine; by PKC/PRKCA and RAF1). At threonine 295 the chain carries Phosphothreonine; by PKC/PRKCA.

It belongs to the troponin T family. In terms of processing, phosphorylation at Thr-214 by PRKCA induces significant reduction in myofilament calcium sensitivity and actomyosin ATPase activity.

Its function is as follows. Troponin T is the tropomyosin-binding subunit of troponin, the thin filament regulatory complex which confers calcium-sensitivity to striated muscle actomyosin ATPase activity. The polypeptide is Troponin T, cardiac muscle (Tnnt2) (Rattus norvegicus (Rat)).